A 431-amino-acid chain; its full sequence is UDP-N-acetylmuramate--L-alanine ligase (431 aa).

Residue Gly-108 to Thr-114 coordinates ATP.

The protein belongs to the MurCDEF family.

It localises to the cytoplasm. The enzyme catalyses UDP-N-acetyl-alpha-D-muramate + L-alanine + ATP = UDP-N-acetyl-alpha-D-muramoyl-L-alanine + ADP + phosphate + H(+). It functions in the pathway cell wall biogenesis; peptidoglycan biosynthesis. Its function is as follows. Cell wall formation. This chain is UDP-N-acetylmuramate--L-alanine ligase, found in Campylobacter jejuni subsp. jejuni serotype O:6 (strain 81116 / NCTC 11828).